A 40-amino-acid polypeptide reads, in one-letter code: Photosystem II reaction center protein J (40 aa).

A helical membrane pass occupies residues 8-28 (IPLWLIGTVTGIPVIGSMGIF).

It belongs to the PsbJ family. PSII is composed of 1 copy each of membrane proteins PsbA, PsbB, PsbC, PsbD, PsbE, PsbF, PsbH, PsbI, PsbJ, PsbK, PsbL, PsbM, PsbT, PsbX, PsbY, PsbZ, Psb30/Ycf12, at least 3 peripheral proteins of the oxygen-evolving complex and a large number of cofactors. It forms dimeric complexes.

It is found in the plastid. The protein localises to the chloroplast thylakoid membrane. Functionally, one of the components of the core complex of photosystem II (PSII). PSII is a light-driven water:plastoquinone oxidoreductase that uses light energy to abstract electrons from H(2)O, generating O(2) and a proton gradient subsequently used for ATP formation. It consists of a core antenna complex that captures photons, and an electron transfer chain that converts photonic excitation into a charge separation. This Illicium oligandrum (Star anise) protein is Photosystem II reaction center protein J.